A 513-amino-acid polypeptide reads, in one-letter code: Noroxomaritidine synthase 2 (513 aa).

A helical transmembrane segment spans residues 14-34; sequence HYPEILIAIACFLIFSLLLSA. Cys-458 provides a ligand contact to heme.

Belongs to the cytochrome P450 family. It depends on heme as a cofactor.

It localises to the membrane. The enzyme catalyses 4'-O-methylnorbelladine + reduced [NADPH--hemoprotein reductase] + O2 = (10bR,4aS)-noroxomaritidine + oxidized [NADPH--hemoprotein reductase] + 2 H2O + H(+). It catalyses the reaction 4'-O-methylnorbelladine + reduced [NADPH--hemoprotein reductase] + O2 = (10bS,4aR)-noroxomaritidine + oxidized [NADPH--hemoprotein reductase] + 2 H2O + H(+). The protein operates within alkaloid biosynthesis. Cytochrome P450 that catalyzes an intramolecular para-para' C-C phenol coupling of 4'-O-methylnorbelladine in alkaloids biosynthesis, including haemanthamine- and crinamine-type alkaloids, promising anticancer agents. Catalyzes the formation of (10bR,4aS)-noroxomaritidine and (10bS,4aR)-noroxomaritidine from 4'-O-methylnorbelladine. This is Noroxomaritidine synthase 2 from Narcissus aff. pseudonarcissus MK-2014 (Daffodil).